Reading from the N-terminus, the 311-residue chain is Ribosomal RNA small subunit methyltransferase H (311 aa).

Residues 33–35, Asp-51, Phe-78, Asp-99, and Gln-106 each bind S-adenosyl-L-methionine; that span reads GGH. Residues 289 to 311 form a disordered region; that stretch reads EEIEKNRRAHSAKLRAAEKLSFA.

This sequence belongs to the methyltransferase superfamily. RsmH family.

Its subcellular location is the cytoplasm. The catalysed reaction is cytidine(1402) in 16S rRNA + S-adenosyl-L-methionine = N(4)-methylcytidine(1402) in 16S rRNA + S-adenosyl-L-homocysteine + H(+). Functionally, specifically methylates the N4 position of cytidine in position 1402 (C1402) of 16S rRNA. This Carboxydothermus hydrogenoformans (strain ATCC BAA-161 / DSM 6008 / Z-2901) protein is Ribosomal RNA small subunit methyltransferase H.